A 614-amino-acid polypeptide reads, in one-letter code: Dihydroxy-acid dehydratase (614 aa).

Mg(2+) is bound at residue aspartate 81. Cysteine 122 provides a ligand contact to [2Fe-2S] cluster. Mg(2+)-binding residues include aspartate 123 and lysine 124. Lysine 124 bears the N6-carboxylysine mark. Cysteine 193 provides a ligand contact to [2Fe-2S] cluster. Mg(2+) is bound at residue glutamate 489. Serine 515 (proton acceptor) is an active-site residue.

Belongs to the IlvD/Edd family. As to quaternary structure, homodimer. [2Fe-2S] cluster is required as a cofactor. Mg(2+) serves as cofactor.

The catalysed reaction is (2R)-2,3-dihydroxy-3-methylbutanoate = 3-methyl-2-oxobutanoate + H2O. It carries out the reaction (2R,3R)-2,3-dihydroxy-3-methylpentanoate = (S)-3-methyl-2-oxopentanoate + H2O. Its pathway is amino-acid biosynthesis; L-isoleucine biosynthesis; L-isoleucine from 2-oxobutanoate: step 3/4. It participates in amino-acid biosynthesis; L-valine biosynthesis; L-valine from pyruvate: step 3/4. In terms of biological role, functions in the biosynthesis of branched-chain amino acids. Catalyzes the dehydration of (2R,3R)-2,3-dihydroxy-3-methylpentanoate (2,3-dihydroxy-3-methylvalerate) into 2-oxo-3-methylpentanoate (2-oxo-3-methylvalerate) and of (2R)-2,3-dihydroxy-3-methylbutanoate (2,3-dihydroxyisovalerate) into 2-oxo-3-methylbutanoate (2-oxoisovalerate), the penultimate precursor to L-isoleucine and L-valine, respectively. The chain is Dihydroxy-acid dehydratase from Marinomonas sp. (strain MWYL1).